The following is a 286-amino-acid chain: Protein GrpE (286 aa).

2 disordered regions span residues 1–51 (MSED…ETTA) and 260–286 (VAAP…QPTT). 2 stretches are compositionally biased toward low complexity: residues 39–50 (QPSSTPQTPETT) and 271–286 (TEST…QPTT).

Belongs to the GrpE family. In terms of assembly, homodimer.

The protein resides in the cytoplasm. In terms of biological role, participates actively in the response to hyperosmotic and heat shock by preventing the aggregation of stress-denatured proteins, in association with DnaK and GrpE. It is the nucleotide exchange factor for DnaK and may function as a thermosensor. Unfolded proteins bind initially to DnaJ; upon interaction with the DnaJ-bound protein, DnaK hydrolyzes its bound ATP, resulting in the formation of a stable complex. GrpE releases ADP from DnaK; ATP binding to DnaK triggers the release of the substrate protein, thus completing the reaction cycle. Several rounds of ATP-dependent interactions between DnaJ, DnaK and GrpE are required for fully efficient folding. The chain is Protein GrpE from Gloeothece citriformis (strain PCC 7424) (Cyanothece sp. (strain PCC 7424)).